Consider the following 408-residue polypeptide: MKQESSLLAKLANGSLVLQILVGIIAGVSLASFSHEAAKQVAFLGSLFVGALKAIAPILVFILVASSIANQKKNTQTNMRPIVVLYLFGTFAAALTAVVLSMMFPTNLVLVAGVEGTSPPQGIGEVINTLLFKLVDNPVNALMTGNYIGILAWGVGLGLALHHASDSTKQVFADVSHGISQMVRFIIRLAPIGIFGLVAATFAETGFAAIAGYAKLLAVLLGAMAIIALIVNPLIVYVKIKRNPYPLVIRCLRESGVTAFFTRSSAANIPVNMALCEKLKLHEDTYSVSIPLGATINMGGAAITITVLTLAAAHTLGIQVDLLTALLLSVVAAISACGASGVAGGSLLLIPLACSLFGISNDVAMQVVAVGFIIGVIQDAAETALNSSTDVIFTAAACEAAENKAKLG.

Helical transmembrane passes span 11–31 (LANGSLVLQILVGIIAGVSLA), 43–63 (FLGSLFVGALKAIAPILVFIL), 82–102 (IVVLYLFGTFAAALTAVVLSM), 141–161 (ALMTGNYIGILAWGVGLGLAL), 192–212 (IGIFGLVAATFAETGFAAIAG), 216–236 (LLAVLLGAMAIIALIVNPLIV), 290–310 (IPLGATINMGGAAITITVLTL), 316–336 (LGIQVDLLTALLLSVVAAISA), and 363–383 (VAMQVVAVGFIIGVIQDAAET).

It belongs to the dicarboxylate/amino acid:cation symporter (DAACS) (TC 2.A.23) family.

It localises to the cell inner membrane. The enzyme catalyses L-serine(in) + Na(+)(in) = L-serine(out) + Na(+)(out). It carries out the reaction L-threonine(in) + Na(+)(in) = L-threonine(out) + Na(+)(out). Involved in the import of serine and threonine into the cell, with the concomitant import of sodium (symport system). This is Serine/threonine transporter SstT from Shewanella sp. (strain ANA-3).